The chain runs to 350 residues: Ion-translocating oxidoreductase complex subunit D (350 aa).

4 consecutive transmembrane segments (helical) span residues 37 to 57 (YYFGYGTLVQLLLAITVAYLA), 78 to 109 (ALVTASLLAVAIPPLAPWWLIVIGTLFAIVIV), 124 to 144 (AMAAYVLLLISFPVQMTSWVA), and 158 to 178 (TFNSIFQLNAGYAADFFHLAI). Threonine 185 is subject to FMN phosphoryl threonine. The next 5 membrane-spanning stretches (helical) occupy residues 212 to 232 (SVGEGWFWVNMAYLVGGLVML), 239 to 259 (WHISGAIVLTLFVCASIGFLI), 264 to 284 (FVSPIMHLFSGGTMLAAFFIA), 298 to 318 (LIFGAMIGLLIYLIRTFGGYP), and 319 to 339 (DAVAFAVLLANMCAPFIDYYV).

The protein belongs to the NqrB/RnfD family. The complex is composed of six subunits: RnfA, RnfB, RnfC, RnfD, RnfE and RnfG. It depends on FMN as a cofactor.

The protein resides in the cell inner membrane. Part of a membrane-bound complex that couples electron transfer with translocation of ions across the membrane. This chain is Ion-translocating oxidoreductase complex subunit D, found in Shewanella frigidimarina (strain NCIMB 400).